We begin with the raw amino-acid sequence, 535 residues long: Cytochrome c oxidase subunit 1 (535 aa).

A helical transmembrane segment spans residues 15-37 (IAILYFIFSTFCGLAGTAMSFII). Residues Glu-40, Ala-43, and Gly-45 each contribute to the Ca(2+) site. 5 consecutive transmembrane segments (helical) span residues 58 to 80 (VLVT…IGGF), 147 to 169 (LAIF…FIVT), 190 to 212 (ILIT…TMLL), 238 to 260 (WFFG…SHIV), and 267 to 289 (PVFG…FLVW). His-63 serves as a coordination point for Fe(II)-heme a. His-242 contributes to the Cu cation binding site. Positions 242-246 (HPEVY) form a cross-link, 1'-histidyl-3'-tyrosine (His-Tyr). Tyr-246 is an O2 binding site. Positions 291 and 292 each coordinate Cu cation. Helical transmembrane passes span 304–326 (AYFT…SWLT) and 339–361 (MLYT…VLAN). Residues His-369 and Asp-370 each coordinate Mg(2+). 2 helical membrane-spanning segments follow: residues 376 to 398 (THFH…YYWS) and 415 to 437 (FWLI…INGM). Heme a3 is bound at residue His-377. Residue His-379 participates in Fe(II)-heme a binding. Residue Pro-442 participates in Ca(2+) binding. Residues 452-474 (NLVSSFGSMMTIMSLMLFTYIIY) traverse the membrane as a helical segment.

This sequence belongs to the heme-copper respiratory oxidase family. In terms of assembly, component of the cytochrome c oxidase (complex IV, CIV), a multisubunit enzyme composed of a catalytic core of 3 subunits and several supernumerary subunits. The complex exists as a monomer or a dimer and forms supercomplexes (SCs) in the inner mitochondrial membrane with ubiquinol-cytochrome c oxidoreductase (cytochrome b-c1 complex, complex III, CIII). Heme serves as cofactor. The cofactor is Cu cation.

The protein localises to the mitochondrion inner membrane. The enzyme catalyses 4 Fe(II)-[cytochrome c] + O2 + 8 H(+)(in) = 4 Fe(III)-[cytochrome c] + 2 H2O + 4 H(+)(out). The protein operates within energy metabolism; oxidative phosphorylation. Component of the cytochrome c oxidase, the last enzyme in the mitochondrial electron transport chain which drives oxidative phosphorylation. The respiratory chain contains 3 multisubunit complexes succinate dehydrogenase (complex II, CII), ubiquinol-cytochrome c oxidoreductase (cytochrome b-c1 complex, complex III, CIII) and cytochrome c oxidase (complex IV, CIV), that cooperate to transfer electrons derived from NADH and succinate to molecular oxygen, creating an electrochemical gradient over the inner membrane that drives transmembrane transport and the ATP synthase. Cytochrome c oxidase is the component of the respiratory chain that catalyzes the reduction of oxygen to water. Electrons originating from reduced cytochrome c in the intermembrane space (IMS) are transferred via the dinuclear copper A center (CU(A)) of subunit 2 and heme A of subunit 1 to the active site in subunit 1, a binuclear center (BNC) formed by heme A3 and copper B (CU(B)). The BNC reduces molecular oxygen to 2 water molecules using 4 electrons from cytochrome c in the IMS and 4 protons from the mitochondrial matrix. The protein is Cytochrome c oxidase subunit 1 (COX1) of Eremothecium gossypii (strain ATCC 10895 / CBS 109.51 / FGSC 9923 / NRRL Y-1056) (Yeast).